A 212-amino-acid polypeptide reads, in one-letter code: 3-demethoxyubiquinol 3-hydroxylase (212 aa).

A compositionally biased stretch (low complexity) spans methionine 1–proline 14. Residues methionine 1 to glutamate 22 are disordered. Fe cation is bound by residues glutamate 58, glutamate 89, histidine 92, glutamate 141, glutamate 173, and histidine 176.

The protein belongs to the COQ7 family. Fe cation serves as cofactor.

It is found in the cell membrane. It carries out the reaction a 5-methoxy-2-methyl-3-(all-trans-polyprenyl)benzene-1,4-diol + AH2 + O2 = a 3-demethylubiquinol + A + H2O. The protein operates within cofactor biosynthesis; ubiquinone biosynthesis. Catalyzes the hydroxylation of 2-nonaprenyl-3-methyl-6-methoxy-1,4-benzoquinol during ubiquinone biosynthesis. In Rhodospirillum rubrum (strain ATCC 11170 / ATH 1.1.1 / DSM 467 / LMG 4362 / NCIMB 8255 / S1), this protein is 3-demethoxyubiquinol 3-hydroxylase.